The primary structure comprises 408 residues: uncharacterized protein (408 aa).

The a divalent metal cation site is built by glutamate 35, aspartate 61, and asparagine 96.

The protein belongs to the metallophosphoesterase superfamily. A divalent metal cation serves as cofactor.

This is an uncharacterized protein from Bacillus subtilis (strain 168).